Here is a 425-residue protein sequence, read N- to C-terminus: UPF0229 protein YE2273 (425 aa).

The tract at residues 84-110 (TNDRIERPQGGGGGSGSGQGNAGQDGE) is disordered. Over residues 92–108 (QGGGGGSGSGQGNAGQD) the composition is skewed to gly residues.

Belongs to the UPF0229 family.

The sequence is that of UPF0229 protein YE2273 from Yersinia enterocolitica serotype O:8 / biotype 1B (strain NCTC 13174 / 8081).